A 348-amino-acid chain; its full sequence is Probable dual-specificity RNA methyltransferase RlmN (348 aa).

Glutamate 93 serves as the catalytic Proton acceptor. One can recognise a Radical SAM core domain in the interval 99 to 333 (TEKRLTACLS…VSLRKSRGLD (235 aa)). Cysteines 106 and 338 form a disulfide. [4Fe-4S] cluster is bound by residues cysteine 113, cysteine 117, and cysteine 120. S-adenosyl-L-methionine is bound by residues 160–161 (GE), serine 190, 219–221 (SLH), and asparagine 295. Residue cysteine 338 is the S-methylcysteine intermediate of the active site.

This sequence belongs to the radical SAM superfamily. RlmN family. [4Fe-4S] cluster serves as cofactor.

It is found in the cytoplasm. The catalysed reaction is adenosine(2503) in 23S rRNA + 2 reduced [2Fe-2S]-[ferredoxin] + 2 S-adenosyl-L-methionine = 2-methyladenosine(2503) in 23S rRNA + 5'-deoxyadenosine + L-methionine + 2 oxidized [2Fe-2S]-[ferredoxin] + S-adenosyl-L-homocysteine. It catalyses the reaction adenosine(37) in tRNA + 2 reduced [2Fe-2S]-[ferredoxin] + 2 S-adenosyl-L-methionine = 2-methyladenosine(37) in tRNA + 5'-deoxyadenosine + L-methionine + 2 oxidized [2Fe-2S]-[ferredoxin] + S-adenosyl-L-homocysteine. Functionally, specifically methylates position 2 of adenine 2503 in 23S rRNA and position 2 of adenine 37 in tRNAs. This is Probable dual-specificity RNA methyltransferase RlmN from Prochlorococcus marinus (strain MIT 9215).